A 110-amino-acid chain; its full sequence is Large ribosomal subunit protein uL22 (110 aa).

Belongs to the universal ribosomal protein uL22 family. In terms of assembly, part of the 50S ribosomal subunit.

Its function is as follows. This protein binds specifically to 23S rRNA; its binding is stimulated by other ribosomal proteins, e.g. L4, L17, and L20. It is important during the early stages of 50S assembly. It makes multiple contacts with different domains of the 23S rRNA in the assembled 50S subunit and ribosome. The globular domain of the protein is located near the polypeptide exit tunnel on the outside of the subunit, while an extended beta-hairpin is found that lines the wall of the exit tunnel in the center of the 70S ribosome. This chain is Large ribosomal subunit protein uL22, found in Vibrio cholerae serotype O1 (strain ATCC 39541 / Classical Ogawa 395 / O395).